We begin with the raw amino-acid sequence, 447 residues long: Chromosomal replication initiator protein DnaA (447 aa).

The tract at residues 1 to 74 is domain I, interacts with DnaA modulators; sequence MENIEELWSA…MLLEVTGSEL (74 aa). A domain II region spans residues 74–108; that stretch reads LNTKFIIPDSLEEIEEQKPMPKPKQSTDTGDSPKS. The disordered stretch occupies residues 85-107; it reads EEIEEQKPMPKPKQSTDTGDSPK. Residues 97–107 show a composition bias toward polar residues; that stretch reads KQSTDTGDSPK. The domain III, AAA+ region stretch occupies residues 109–325; the sequence is MLNSKYTFDT…GALIRVVAYS (217 aa). The ATP site is built by G153, G155, K156, and T157. The domain IV, binds dsDNA stretch occupies residues 326-447; sequence SLVNQDIDAS…EELKEKLKSI (122 aa).

It belongs to the DnaA family. As to quaternary structure, oligomerizes as a right-handed, spiral filament on DNA at oriC.

The protein resides in the cytoplasm. Its function is as follows. Plays an essential role in the initiation and regulation of chromosomal replication. ATP-DnaA binds to the origin of replication (oriC) to initiate formation of the DNA replication initiation complex once per cell cycle. Binds the DnaA box (a 9 base pair repeat at the origin) and separates the double-stranded (ds)DNA. Forms a right-handed helical filament on oriC DNA; dsDNA binds to the exterior of the filament while single-stranded (ss)DNA is stabiized in the filament's interior. The ATP-DnaA-oriC complex binds and stabilizes one strand of the AT-rich DNA unwinding element (DUE), permitting loading of DNA polymerase. After initiation quickly degrades to an ADP-DnaA complex that is not apt for DNA replication. Binds acidic phospholipids. The protein is Chromosomal replication initiator protein DnaA of Oceanobacillus iheyensis (strain DSM 14371 / CIP 107618 / JCM 11309 / KCTC 3954 / HTE831).